Consider the following 360-residue polypeptide: Phospho-N-acetylmuramoyl-pentapeptide-transferase (360 aa).

10 helical membrane-spanning segments follow: residues 21–41 (YITVRANLALLTALFISLWIG), 73–93 (TMGGVMILFSIGVSTLLWANL), 94–114 (ANPYIWVCLFVLFGYGAIGFV), 132–152 (WKYFWMSVVALVAILWLYWLG), 168–188 (IMPQLGLFYIVLSYFVIVGTG), 199–219 (GLAIMPTALVAGAFALIAWAT), 239–259 (VVVFCTAIVGASLGFLWFNTY), 263–283 (VFMGDVGSLALGGALGVVAIL), 288–308 (FLLVIMGGVFVVEALSVILQV), and 338–358 (VIIRFWIISLMLVLMGLVTLK).

It belongs to the glycosyltransferase 4 family. MraY subfamily. Mg(2+) is required as a cofactor.

Its subcellular location is the cell inner membrane. It catalyses the reaction UDP-N-acetyl-alpha-D-muramoyl-L-alanyl-gamma-D-glutamyl-meso-2,6-diaminopimeloyl-D-alanyl-D-alanine + di-trans,octa-cis-undecaprenyl phosphate = di-trans,octa-cis-undecaprenyl diphospho-N-acetyl-alpha-D-muramoyl-L-alanyl-D-glutamyl-meso-2,6-diaminopimeloyl-D-alanyl-D-alanine + UMP. The protein operates within cell wall biogenesis; peptidoglycan biosynthesis. Catalyzes the initial step of the lipid cycle reactions in the biosynthesis of the cell wall peptidoglycan: transfers peptidoglycan precursor phospho-MurNAc-pentapeptide from UDP-MurNAc-pentapeptide onto the lipid carrier undecaprenyl phosphate, yielding undecaprenyl-pyrophosphoryl-MurNAc-pentapeptide, known as lipid I. The sequence is that of Phospho-N-acetylmuramoyl-pentapeptide-transferase from Haemophilus influenzae (strain ATCC 51907 / DSM 11121 / KW20 / Rd).